The chain runs to 975 residues: Exportin-2 (975 aa).

The Importin N-terminal domain occupies A29 to H105.

It belongs to the XPO2/CSE1 family. Binds with high affinity to importin-alpha only in the presence of RanGTP.

It localises to the cytoplasm. The protein resides in the nucleus. Functionally, export receptor for importin alpha. Mediates importin-alpha re-export from the nucleus to the cytoplasm after import substrates have been released into the nucleoplasm. In Drosophila melanogaster (Fruit fly), this protein is Exportin-2.